We begin with the raw amino-acid sequence, 319 residues long: MAAAAAAAAAEQQSSNGPVKKSMREKAVERRNVNKEHNSNFKAGYIPIDEDRLHKTGLRGRKGNLAICVIILLFILAVINLIITLVIWAVIRIGPNGCDSMEFHESGLLRFKQVSDMGVIHPLYKSTVGGRRNENLVITGNNQPIVFQQGTTKLSVENNKTSITSDIGMQFFDPRTQNILFSTDYETHEFHLPSGVKSLNVQKASTERITSNATSDLNIKVDGRAIVRGNEGVFIMGKTIEFHMGGNMELKAENSIILNGSVMVSTTRLPSSSSGDQLGSGDWVRYKLCMCADGTLFKVQVTSQNMGCQISDNPCGNTH.

Low complexity predominate over residues 1 to 10 (MAAAAAAAAA). The interval 1–33 (MAAAAAAAAAEQQSSNGPVKKSMREKAVERRNV) is disordered. Over 1–66 (MAAAAAAAAA…GLRGRKGNLA (66 aa)) the chain is Cytoplasmic. Residues 22-33 (SMREKAVERRNV) are compositionally biased toward basic and acidic residues. A helical; Signal-anchor for type II membrane protein membrane pass occupies residues 67–87 (ICVIILLFILAVINLIITLVI). Residues 88 to 318 (WAVIRIGPNG…QISDNPCGNT (231 aa)) lie on the Extracellular side of the membrane. 3 N-linked (GlcNAc...) asparagine glycosylation sites follow: N159, N212, and N259. 2 disulfide bridges follow: C289–C315 and C291–C308.

This sequence belongs to the sarcoglycan beta/delta/gamma/zeta family. Cross-link to form 2 major subcomplexes: one consisting of SGCB, SGCD and SGCG and the other consisting of SGCB and SGCD. The association between SGCB and SGCG is particularly strong while SGCA is loosely associated with the other sarcoglycans. Disulfide bonds are present.

The protein resides in the cell membrane. The protein localises to the sarcolemma. It localises to the cytoplasm. It is found in the cytoskeleton. In terms of biological role, component of the sarcoglycan complex, a subcomplex of the dystrophin-glycoprotein complex which forms a link between the F-actin cytoskeleton and the extracellular matrix. The sequence is that of Beta-sarcoglycan (SGCB) from Pongo abelii (Sumatran orangutan).